Reading from the N-terminus, the 430-residue chain is Serine--tRNA ligase (430 aa).

235-237 lines the L-serine pocket; the sequence is TSE. Position 266-268 (266-268) interacts with ATP; that stretch reads RSE. Glu-289 contacts L-serine. 353–356 is a binding site for ATP; it reads EISS. An L-serine-binding site is contributed by Ser-388.

Belongs to the class-II aminoacyl-tRNA synthetase family. Type-1 seryl-tRNA synthetase subfamily. Homodimer. The tRNA molecule binds across the dimer.

Its subcellular location is the cytoplasm. The catalysed reaction is tRNA(Ser) + L-serine + ATP = L-seryl-tRNA(Ser) + AMP + diphosphate + H(+). It carries out the reaction tRNA(Sec) + L-serine + ATP = L-seryl-tRNA(Sec) + AMP + diphosphate + H(+). It functions in the pathway aminoacyl-tRNA biosynthesis; selenocysteinyl-tRNA(Sec) biosynthesis; L-seryl-tRNA(Sec) from L-serine and tRNA(Sec): step 1/1. In terms of biological role, catalyzes the attachment of serine to tRNA(Ser). Is also able to aminoacylate tRNA(Sec) with serine, to form the misacylated tRNA L-seryl-tRNA(Sec), which will be further converted into selenocysteinyl-tRNA(Sec). This chain is Serine--tRNA ligase, found in Azoarcus sp. (strain BH72).